A 158-amino-acid chain; its full sequence is Small ribosomal subunit protein uS15 (158 aa).

A compositionally biased stretch (basic residues) spans 1 to 18 (MARMHARKRGKSGSKRPP). The tract at residues 1–21 (MARMHARKRGKSGSKRPPRTA) is disordered.

The protein belongs to the universal ribosomal protein uS15 family. As to quaternary structure, part of the 30S ribosomal subunit.

This chain is Small ribosomal subunit protein uS15, found in Pyrococcus horikoshii (strain ATCC 700860 / DSM 12428 / JCM 9974 / NBRC 100139 / OT-3).